The primary structure comprises 398 residues: Acetate kinase (398 aa).

Position 10 (Asn-10) interacts with Mg(2+). Lys-17 serves as a coordination point for ATP. Arg-91 provides a ligand contact to substrate. Asp-148 functions as the Proton donor/acceptor in the catalytic mechanism. Residues 208-212, 283-285, and 331-335 contribute to the ATP site; these read HLGNG, DCR, and GIGEN. Mg(2+) is bound at residue Glu-385.

This sequence belongs to the acetokinase family. As to quaternary structure, homodimer. The cofactor is Mg(2+). Requires Mn(2+) as cofactor.

It is found in the cytoplasm. It carries out the reaction acetate + ATP = acetyl phosphate + ADP. It functions in the pathway metabolic intermediate biosynthesis; acetyl-CoA biosynthesis; acetyl-CoA from acetate: step 1/2. Its function is as follows. Catalyzes the formation of acetyl phosphate from acetate and ATP. Can also catalyze the reverse reaction. The polypeptide is Acetate kinase (Shewanella woodyi (strain ATCC 51908 / MS32)).